Reading from the N-terminus, the 85-residue chain is Large ribosomal subunit protein bL27 (85 aa).

A disordered region spans residues 1–20 (MAHKKGASSSRNGRDSNAQR). Residues 7–19 (ASSSRNGRDSNAQ) are compositionally biased toward polar residues.

This sequence belongs to the bacterial ribosomal protein bL27 family.

The protein is Large ribosomal subunit protein bL27 of Kineococcus radiotolerans (strain ATCC BAA-149 / DSM 14245 / SRS30216).